Consider the following 213-residue polypeptide: Uridine kinase (213 aa).

15–22 (GGSGSGKT) lines the ATP pocket.

It belongs to the uridine kinase family.

The protein localises to the cytoplasm. The catalysed reaction is uridine + ATP = UMP + ADP + H(+). It carries out the reaction cytidine + ATP = CMP + ADP + H(+). Its pathway is pyrimidine metabolism; CTP biosynthesis via salvage pathway; CTP from cytidine: step 1/3. The protein operates within pyrimidine metabolism; UMP biosynthesis via salvage pathway; UMP from uridine: step 1/1. This chain is Uridine kinase, found in Ligilactobacillus salivarius (strain UCC118) (Lactobacillus salivarius).